A 198-amino-acid polypeptide reads, in one-letter code: Sensory transduction protein RegX3 (198 aa).

Positions 1 to 87 (MVTDGPAALA…ELIARIRAVL (87 aa)) constitute a Response regulatory domain. Aspartate 23 carries the 4-aspartylphosphate modification. The segment at residues 99–198 (DGVLESGPLR…VRGLGYKLES (100 aa)) is a DNA-binding region (ompR/PhoB-type).

Post-translationally, phosphorylated by SenX3.

Its function is as follows. Member of the two-component regulatory system SenX3/RegX3. The polypeptide is Sensory transduction protein RegX3 (rgx3) (Mycobacterium leprae (strain TN)).